The chain runs to 204 residues: Recombination protein RecR (204 aa).

A C4-type zinc finger spans residues 58 to 75; sequence CSVCQNITDVGVDPCALC. The region spanning 83–181 is the Toprim domain; that stretch reads SVICVVESPV…HVTKIARGIP (99 aa).

This sequence belongs to the RecR family.

In terms of biological role, may play a role in DNA repair. It seems to be involved in an RecBC-independent recombinational process of DNA repair. It may act with RecF and RecO. The chain is Recombination protein RecR from Pelodictyon phaeoclathratiforme (strain DSM 5477 / BU-1).